Here is a 242-residue protein sequence, read N- to C-terminus: 4-hydroxy-tetrahydrodipicolinate reductase (242 aa).

NAD(+) is bound by residues 8 to 13, 75 to 77, and 99 to 102; these read GAKGRM, GTT, and ATNM. The Proton donor/acceptor role is filled by His131. His132 provides a ligand contact to (S)-2,3,4,5-tetrahydrodipicolinate. The Proton donor role is filled by Lys135. 141–142 is a binding site for (S)-2,3,4,5-tetrahydrodipicolinate; the sequence is GT.

It belongs to the DapB family.

The protein resides in the cytoplasm. It carries out the reaction (S)-2,3,4,5-tetrahydrodipicolinate + NAD(+) + H2O = (2S,4S)-4-hydroxy-2,3,4,5-tetrahydrodipicolinate + NADH + H(+). It catalyses the reaction (S)-2,3,4,5-tetrahydrodipicolinate + NADP(+) + H2O = (2S,4S)-4-hydroxy-2,3,4,5-tetrahydrodipicolinate + NADPH + H(+). Its pathway is amino-acid biosynthesis; L-lysine biosynthesis via DAP pathway; (S)-tetrahydrodipicolinate from L-aspartate: step 4/4. Catalyzes the conversion of 4-hydroxy-tetrahydrodipicolinate (HTPA) to tetrahydrodipicolinate. The chain is 4-hydroxy-tetrahydrodipicolinate reductase from Campylobacter jejuni subsp. jejuni serotype O:6 (strain 81116 / NCTC 11828).